We begin with the raw amino-acid sequence, 90 residues long: SAGA-associated factor 11 (90 aa).

An SGF11-type zinc finger spans residues 63-84 (FSCDNCGRKIAGGRFAQHINKC).

The protein belongs to the SGF11 family. Component of the 1.8 MDa SAGA transcription coactivator-HAT complex. SAGA is built of 5 distinct domains with specialized functions. Within the SAGA complex, SUS1, SGF11, SGF73 and UBP8 form an additional subcomplex of SAGA called the DUB module (deubiquitination module). Interacts directly with SGF73, SUS1 and UBP8.

The protein localises to the nucleus. Functionally, functions as a component of the transcription regulatory histone acetylation (HAT) complex SAGA. At the promoters, SAGA is required for recruitment of the basal transcription machinery. It influences RNA polymerase II transcriptional activity through different activities such as TBP interaction and promoter selectivity, interaction with transcription activators, and chromatin modification through histone acetylation and deubiquitination. SAGA acetylates nucleosomal histone H3 to some extent (to form H3K9ac, H3K14ac, H3K18ac and H3K23ac). SAGA interacts with DNA via upstream activating sequences (UASs). Involved in transcriptional regulation of a subset of SAGA-regulated genes. Within the SAGA complex, participates in a subcomplex, that specifically deubiquitinates histones H2B. This chain is SAGA-associated factor 11, found in Lodderomyces elongisporus (strain ATCC 11503 / CBS 2605 / JCM 1781 / NBRC 1676 / NRRL YB-4239) (Yeast).